The primary structure comprises 240 residues: UDP-2,3-diacylglucosamine hydrolase (240 aa).

Residues aspartate 7, histidine 9, aspartate 40, asparagine 78, and histidine 113 each contribute to the Mn(2+) site. 78–79 (NR) contributes to the substrate binding site. Residues aspartate 121, serine 159, threonine 163, lysine 166, and histidine 194 each coordinate substrate. Positions 194 and 196 each coordinate Mn(2+).

The protein belongs to the LpxH family. Mn(2+) is required as a cofactor.

It is found in the cell inner membrane. The catalysed reaction is UDP-2-N,3-O-bis[(3R)-3-hydroxytetradecanoyl]-alpha-D-glucosamine + H2O = 2-N,3-O-bis[(3R)-3-hydroxytetradecanoyl]-alpha-D-glucosaminyl 1-phosphate + UMP + 2 H(+). It participates in glycolipid biosynthesis; lipid IV(A) biosynthesis; lipid IV(A) from (3R)-3-hydroxytetradecanoyl-[acyl-carrier-protein] and UDP-N-acetyl-alpha-D-glucosamine: step 4/6. Functionally, hydrolyzes the pyrophosphate bond of UDP-2,3-diacylglucosamine to yield 2,3-diacylglucosamine 1-phosphate (lipid X) and UMP by catalyzing the attack of water at the alpha-P atom. Involved in the biosynthesis of lipid A, a phosphorylated glycolipid that anchors the lipopolysaccharide to the outer membrane of the cell. The polypeptide is UDP-2,3-diacylglucosamine hydrolase (Stutzerimonas stutzeri (strain A1501) (Pseudomonas stutzeri)).